The chain runs to 518 residues: GMP synthase [glutamine-hydrolyzing] (518 aa).

The region spanning 8–201 (TVLIIDFGSQ…VHKISGLKGN (194 aa)) is the Glutamine amidotransferase type-1 domain. The Nucleophile role is filled by Cys-85. Residues His-175 and Glu-177 contribute to the active site. Residues 202-393 (WSMASYRDQA…LGLPEQFLGR (192 aa)) enclose the GMPS ATP-PPase domain. 229 to 235 (SGGVDSS) contributes to the ATP binding site.

Homodimer.

It catalyses the reaction XMP + L-glutamine + ATP + H2O = GMP + L-glutamate + AMP + diphosphate + 2 H(+). Its pathway is purine metabolism; GMP biosynthesis; GMP from XMP (L-Gln route): step 1/1. Functionally, catalyzes the synthesis of GMP from XMP. In Bartonella quintana (strain Toulouse) (Rochalimaea quintana), this protein is GMP synthase [glutamine-hydrolyzing].